The chain runs to 1451 residues: ARF guanine-nucleotide exchange factor GNOM (1451 aa).

The interval 1–246 (MGRLKLHSGI…VNRAGSIKQE (246 aa)) is DCB domain. The region spanning 557–752 (RRKYIKRRLM…NEIRTTPEQG (196 aa)) is the SEC7 domain. Glutamate 658 is a catalytic residue. Positions 1430–1451 (SQLGDDETVSNGLSSPENTTGS) are disordered.

In terms of assembly, homodimer. Interacts with CYP19-4/CYP5 in vitro. As to expression, stems, leaves, flowers, siliques, floral inflorescence and roots. Expressed in the whole plant (at the protein level).

It is found in the cytoplasm. It localises to the cytosol. The protein resides in the endosome membrane. The protein localises to the cell membrane. Its activity is regulated as follows. Inhibited by brefeldin A (BFA). In terms of biological role, activates the ARF proteins by exchanging bound GDP for free GTP. Plays a role in vesicular protein sorting. Acts as the major regulator of endosomal vesicle trafficking but is also involved in the endocytosis process. Could function redundantly with GNL1 in the retrograde Golgi to endoplasmic reticulum trafficking. Regulates vesicle trafficking required for the coordinated polar localization of auxin efflux carriers which in turn determines the direction of auxin flow. Mediates the sorting of PIN1 from endosomal compartments to the basal plasma membrane and the polarization of PIN3 to the bottom side of hypocotyl endodermal cells. Involved in the specification of apical-basal pattern formation in the early embryo and during root formation. Required for correct cell wall organization leading to normal cell adhesion during seedling development. Also plays an essential role in hydrotropism of seedling roots. The sequence is that of ARF guanine-nucleotide exchange factor GNOM (GN) from Arabidopsis thaliana (Mouse-ear cress).